A 162-amino-acid chain; its full sequence is Dihydrofolate reductase (162 aa).

Residues 3–161 form the DHFR domain; the sequence is KITLIAACAE…TRYAFVHYLR (159 aa). Residue 7 to 9 participates in substrate binding; sequence IAA. NADP(+) is bound by residues 8–9 and 16–21; these read AA and IGAGNA. D29 is a binding site for substrate. 45–48 is an NADP(+) binding site; it reads GRKT. R60 is a substrate binding site. NADP(+) contacts are provided by residues 65 to 68 and 98 to 103; these read ISRQ and MGGAQI. T117 lines the substrate pocket.

It belongs to the dihydrofolate reductase family.

The enzyme catalyses (6S)-5,6,7,8-tetrahydrofolate + NADP(+) = 7,8-dihydrofolate + NADPH + H(+). Its pathway is cofactor biosynthesis; tetrahydrofolate biosynthesis; 5,6,7,8-tetrahydrofolate from 7,8-dihydrofolate: step 1/1. Key enzyme in folate metabolism. Catalyzes an essential reaction for de novo glycine and purine synthesis, and for DNA precursor synthesis. In Neisseria meningitidis serogroup B (strain ATCC BAA-335 / MC58), this protein is Dihydrofolate reductase (folA).